Reading from the N-terminus, the 195-residue chain is Ras-related protein rac-2 (195 aa).

GTP is bound at residue 10–17; sequence GDGAVGKT. The Effector region motif lies at 32 to 40; the sequence is YILTVFDTY. GTP-binding positions include 57-61 and 115-118; these read DTAGQ and TKAD. The interval 176 to 195 is disordered; it reads GLTPPQTPQTRAKKSNCTVL. Cys192 carries the post-translational modification Cysteine methyl ester. A lipid anchor (S-geranylgeranyl cysteine) is attached at Cys192. The propeptide at 193–195 is removed in mature form; the sequence is TVL.

This sequence belongs to the small GTPase superfamily. Rho family.

The protein resides in the cell membrane. Its function is as follows. During gonad morphogenesis, plays a role in distal tip cell (DTC)-mediated guidance of gonad elongation. The protein is Ras-related protein rac-2 (rac-2) of Caenorhabditis elegans.